We begin with the raw amino-acid sequence, 734 residues long: Photosystem I P700 chlorophyll a apoprotein A2 (734 aa).

8 consecutive transmembrane segments (helical) span residues 46–69, 135–158, 175–199, 273–291, 330–353, 369–395, 417–439, and 517–535; these read IFAS…FHVA, LYAG…LHLQ, LNHH…HVAI, MAHH…GHMY, LHFQ…QHMY, AALY…IFLI, AIIS…LYVH, and FLVH…LILV. Positions 559 and 568 each coordinate [4Fe-4S] cluster. 2 helical membrane passes run 575 to 596 and 643 to 665; these read AFYL…YWHW and LSVW…MFLI. Positions 654, 662, and 670 each coordinate chlorophyll a. Tryptophan 671 serves as a coordination point for phylloquinone. A helical membrane pass occupies residues 707–727; the sequence is LVGLAHFSVGYIFTYAAFLIA.

This sequence belongs to the PsaA/PsaB family. In terms of assembly, the PsaA/B heterodimer binds the P700 chlorophyll special pair and subsequent electron acceptors. PSI consists of a core antenna complex that captures photons, and an electron transfer chain that converts photonic excitation into a charge separation. The eukaryotic PSI reaction center is composed of at least 11 subunits. Requires P700 is a chlorophyll a/chlorophyll a' dimer, A0 is one or more chlorophyll a, A1 is one or both phylloquinones and FX is a shared 4Fe-4S iron-sulfur center. as cofactor.

Its subcellular location is the plastid. The protein resides in the chloroplast thylakoid membrane. It carries out the reaction reduced [plastocyanin] + hnu + oxidized [2Fe-2S]-[ferredoxin] = oxidized [plastocyanin] + reduced [2Fe-2S]-[ferredoxin]. Its function is as follows. PsaA and PsaB bind P700, the primary electron donor of photosystem I (PSI), as well as the electron acceptors A0, A1 and FX. PSI is a plastocyanin-ferredoxin oxidoreductase, converting photonic excitation into a charge separation, which transfers an electron from the donor P700 chlorophyll pair to the spectroscopically characterized acceptors A0, A1, FX, FA and FB in turn. Oxidized P700 is reduced on the lumenal side of the thylakoid membrane by plastocyanin. The polypeptide is Photosystem I P700 chlorophyll a apoprotein A2 (Pinus thunbergii (Japanese black pine)).